Reading from the N-terminus, the 916-residue chain is MFAPLLKKLFGSKNERDVKRMAKAVQAINALEPQMVALSDEQLKAKTAEFQQRYAKGETLDQLLPEAFAVVREAGKRVMGMRHFDVQLIGGMTLHDGKIAEMRTGEGKTLVGTLPVYLNALSGKGVHVVTVNDYLARRDANWMRPLYEFLGLSVGVVTPFQPPEDKRAAYAADITYGTNNEFGFDYLRDNMAFSLDDKFQRELNFAVVDEVDSILIDEARTPLIISGQAEDSSELYIKINKLIPRLKRQVEEVEGKPSEEGHYSIDEKTRQVELNEQGHQFIEDLLSQNGLLGEGESLYSAHNLSLLTHVYAALRAHTLFHRNVEYIVQGDQILLIDEHTGRTMPGRRLSEGLHQAIEAKEGLPIQAESQTLASTTFQNYFRLYNKLAGMTGTADTEAFEFRQIYGLDVVVIPTHRPIARKDFNDLVYLTQEEKYAAIITDIKQCQALGRPILVGTASIESSEYVSKLLQQAGIEHKVLNAKYHEKEAEIIAQAGAPGSVTIATNMAGRGTDILLGGNWEVEVAALENPTEEQIAQIKAEWQKRHQQVIEAGGLHVIASERHESRRIDNQLRGRAGRQGDPGSSRFYLSLEDNLMRIFASDRVKNFMKALGMQSGEAIEHRMVTNAIEKAQRKVEGRNFDIRKQLLEFDDVANEQRKVIYHMRNTLLSAEDVGETIKEFREETLNATINQHIPPQSLPEQWDVEGLEAALYSDFAVRLPIQQWLDEDDKLYEETLRSKILEQIVAAYYEKEELAGAEALRAFEKQMLLRVLDDLWKDHLSTMDHLRHGIHLRGYAQKNPKQEYKRESFTLFQELLDSIKRDTIRVLSHVQVRREDPAEEEARLRREAEELAKRMQFQHAEAPSMEQAVAGEDEELPEGPAPVVPLEPVRNEQKIGRNEPCPCGSGKKYKHCHGQLD.

ATP contacts are provided by residues Gln87, 105 to 109 (GEGKT), and Asp512. The tract at residues 857–916 (QHAEAPSMEQAVAGEDEELPEGPAPVVPLEPVRNEQKIGRNEPCPCGSGKKYKHCHGQLD) is disordered. Cys900, Cys902, Cys911, and His912 together coordinate Zn(2+). Basic residues predominate over residues 906-916 (KKYKHCHGQLD).

It belongs to the SecA family. As to quaternary structure, monomer and homodimer. Part of the essential Sec protein translocation apparatus which comprises SecA, SecYEG and auxiliary proteins SecDF-YajC and YidC. Zn(2+) serves as cofactor.

It localises to the cell inner membrane. The protein resides in the cytoplasm. It catalyses the reaction ATP + H2O + cellular proteinSide 1 = ADP + phosphate + cellular proteinSide 2.. Functionally, part of the Sec protein translocase complex. Interacts with the SecYEG preprotein conducting channel. Has a central role in coupling the hydrolysis of ATP to the transfer of proteins into and across the cell membrane, serving both as a receptor for the preprotein-SecB complex and as an ATP-driven molecular motor driving the stepwise translocation of polypeptide chains across the membrane. The polypeptide is Protein translocase subunit SecA (Pseudomonas paraeruginosa (strain DSM 24068 / PA7) (Pseudomonas aeruginosa (strain PA7))).